We begin with the raw amino-acid sequence, 522 residues long: tRNA-2-methylthio-N(6)-dimethylallyladenosine synthase (522 aa).

Over residues 1-26 the composition is skewed to low complexity; it reads MSLTIPSPASGTSTSATTDTAPAAAP. A disordered region spans residues 1–27; the sequence is MSLTIPSPASGTSTSATTDTAPAAAPQ. One can recognise an MTTase N-terminal domain in the interval 28–143; the sequence is RTYQVRTFGC…LPALLDRARH (116 aa). Positions 37, 72, 106, 180, 184, and 187 each coordinate [4Fe-4S] cluster. The 231-residue stretch at 166–396 folds into the Radical SAM core domain; it reads RDSVYSGWVS…TALQDRIAAE (231 aa). Residues 399 to 469 form the TRAM domain; sequence ARQLGRRVEV…AFHLVADPAS (71 aa). Positions 481 to 522 are disordered; that stretch reads GDAWDRSQADSCGAPVAGGGAGSNGGKGGVSLGMPALPVRRS. Residues 496–511 show a composition bias toward gly residues; it reads VAGGGAGSNGGKGGVS.

The protein belongs to the methylthiotransferase family. MiaB subfamily. As to quaternary structure, monomer. [4Fe-4S] cluster serves as cofactor.

Its subcellular location is the cytoplasm. It catalyses the reaction N(6)-dimethylallyladenosine(37) in tRNA + (sulfur carrier)-SH + AH2 + 2 S-adenosyl-L-methionine = 2-methylsulfanyl-N(6)-dimethylallyladenosine(37) in tRNA + (sulfur carrier)-H + 5'-deoxyadenosine + L-methionine + A + S-adenosyl-L-homocysteine + 2 H(+). In terms of biological role, catalyzes the methylthiolation of N6-(dimethylallyl)adenosine (i(6)A), leading to the formation of 2-methylthio-N6-(dimethylallyl)adenosine (ms(2)i(6)A) at position 37 in tRNAs that read codons beginning with uridine. The polypeptide is tRNA-2-methylthio-N(6)-dimethylallyladenosine synthase (Arthrobacter sp. (strain FB24)).